A 150-amino-acid chain; its full sequence is Cell division protein SepF (150 aa).

This sequence belongs to the SepF family. As to quaternary structure, homodimer. Interacts with FtsZ.

The protein localises to the cytoplasm. Its function is as follows. Cell division protein that is part of the divisome complex and is recruited early to the Z-ring. Probably stimulates Z-ring formation, perhaps through the cross-linking of FtsZ protofilaments. Its function overlaps with FtsA. The chain is Cell division protein SepF from Clostridium botulinum (strain ATCC 19397 / Type A).